Consider the following 143-residue polypeptide: Large ribosomal subunit protein eL28z (143 aa).

This sequence belongs to the eukaryotic ribosomal protein eL28 family. In terms of assembly, component of the large ribosomal subunit. Expressed in seedlings, roots, stems, leaves, inflorescences and siliques.

The protein resides in the cytoplasm. It localises to the nucleus. It is found in the nucleolus. The protein localises to the nucleoplasm. Its function is as follows. Component of the large ribosomal subunit. Essential in leaf polarity establishment, probably having a role for translation in leaf dorsoventral patterning to specify leaf adaxial identity. This Arabidopsis thaliana (Mouse-ear cress) protein is Large ribosomal subunit protein eL28z.